Consider the following 151-residue polypeptide: Deoxyuridine 5'-triphosphate nucleotidohydrolase (151 aa).

Residues 70 to 72, N83, 87 to 89, and M97 contribute to the substrate site; these read RSG and LID.

Belongs to the dUTPase family. Homotrimer. It depends on Mg(2+) as a cofactor.

The catalysed reaction is dUTP + H2O = dUMP + diphosphate + H(+). Its pathway is pyrimidine metabolism; dUMP biosynthesis; dUMP from dCTP (dUTP route): step 2/2. This enzyme is involved in nucleotide metabolism: it produces dUMP, the immediate precursor of thymidine nucleotides and it decreases the intracellular concentration of dUTP so that uracil cannot be incorporated into DNA. This Escherichia fergusonii (strain ATCC 35469 / DSM 13698 / CCUG 18766 / IAM 14443 / JCM 21226 / LMG 7866 / NBRC 102419 / NCTC 12128 / CDC 0568-73) protein is Deoxyuridine 5'-triphosphate nucleotidohydrolase.